A 406-amino-acid polypeptide reads, in one-letter code: Cysteine desulfurase (406 aa).

An N6-(pyridoxal phosphate)lysine modification is found at lysine 226. Cysteine 364 functions as the Cysteine persulfide intermediate in the catalytic mechanism.

It belongs to the class-V pyridoxal-phosphate-dependent aminotransferase family. Csd subfamily. As to quaternary structure, homodimer. Interacts with SufE and the SufBCD complex composed of SufB, SufC and SufD. The interaction with SufE is required to mediate the direct transfer of the sulfur atom from the S-sulfanylcysteine. It depends on pyridoxal 5'-phosphate as a cofactor.

It is found in the cytoplasm. It carries out the reaction (sulfur carrier)-H + L-cysteine = (sulfur carrier)-SH + L-alanine. It catalyses the reaction L-selenocysteine + AH2 = hydrogenselenide + L-alanine + A + H(+). The protein operates within cofactor biosynthesis; iron-sulfur cluster biosynthesis. Cysteine desulfurases mobilize the sulfur from L-cysteine to yield L-alanine, an essential step in sulfur metabolism for biosynthesis of a variety of sulfur-containing biomolecules. Component of the suf operon, which is activated and required under specific conditions such as oxidative stress and iron limitation. Acts as a potent selenocysteine lyase in vitro, that mobilizes selenium from L-selenocysteine. Selenocysteine lyase activity is however unsure in vivo. The chain is Cysteine desulfurase from Escherichia coli O8 (strain IAI1).